The following is a 1035-amino-acid chain: Alpha-mannosidase B (1035 aa).

Residues 1–20 form the signal peptide; that stretch reads MGKVLILFLFVLLLITFINC. N-linked (GlcNAc...) asparagine glycans are attached at residues Asn19 and Asn30. Zn(2+) is bound by residues His47 and Asp49. N-linked (GlcNAc...) asparagine glycosylation is present at Asn63. Position 161 (Asp161) interacts with Zn(2+). Asp161 serves as the catalytic Nucleophile. N-linked (GlcNAc...) asparagine glycosylation is found at Asn245, Asn250, Asn270, Asn309, Asn327, and Asn438. Position 446 (His446) interacts with Zn(2+). Residues Asn487, Asn497, Asn503, Asn710, Asn719, Asn735, Asn792, Asn852, Asn863, Asn880, Asn962, and Asn993 are each glycosylated (N-linked (GlcNAc...) asparagine).

The protein belongs to the glycosyl hydrolase 38 family. Zn(2+) is required as a cofactor.

It localises to the secreted. The catalysed reaction is Hydrolysis of terminal, non-reducing alpha-D-mannose residues in alpha-D-mannosides.. The chain is Alpha-mannosidase B (manB) from Dictyostelium discoideum (Social amoeba).